Reading from the N-terminus, the 374-residue chain is Flap endonuclease 1 (374 aa).

Residues 1–105 form an N-domain region; that stretch reads MGIKGLTALI…ELLQKRFGRR (105 aa). Mg(2+) is bound at residue aspartate 34. DNA contacts are provided by arginine 47 and arginine 71. Residue aspartate 87 participates in Mg(2+) binding. The segment at 103-122 is disordered; sequence GRREEAREQEEEQKDVADAE. The tract at residues 123–254 is I-domain; it reads KMDQLARRQV…KTALKLIREH (132 aa). Positions 159, 161, 180, and 182 each coordinate Mg(2+). Glutamate 159 is a DNA binding site. DNA is bound by residues glycine 232 and aspartate 234. Residue aspartate 234 participates in Mg(2+) binding. The interval 335–374 is disordered; it reads SLSQKQQGRLDGFFTVKPGSAPPKRKAEDDKKNVKKKGKK. An interaction with PCNA region spans residues 340–348; that stretch reads QQGRLDGFF.

Belongs to the XPG/RAD2 endonuclease family. FEN1 subfamily. In terms of assembly, interacts with PCNA. Three molecules of FEN1 bind to one PCNA trimer with each molecule binding to one PCNA monomer. PCNA stimulates the nuclease activity without altering cleavage specificity. The cofactor is Mg(2+). Post-translationally, phosphorylated. Phosphorylation upon DNA damage induces relocalization to the nuclear plasma.

It is found in the nucleus. The protein resides in the nucleolus. It localises to the nucleoplasm. The protein localises to the mitochondrion. Structure-specific nuclease with 5'-flap endonuclease and 5'-3' exonuclease activities involved in DNA replication and repair. During DNA replication, cleaves the 5'-overhanging flap structure that is generated by displacement synthesis when DNA polymerase encounters the 5'-end of a downstream Okazaki fragment. It enters the flap from the 5'-end and then tracks to cleave the flap base, leaving a nick for ligation. Also involved in the long patch base excision repair (LP-BER) pathway, by cleaving within the apurinic/apyrimidinic (AP) site-terminated flap. Acts as a genome stabilization factor that prevents flaps from equilibrating into structures that lead to duplications and deletions. Also possesses 5'-3' exonuclease activity on nicked or gapped double-stranded DNA, and exhibits RNase H activity. Also involved in replication and repair of rDNA and in repairing mitochondrial DNA. This Mycosarcoma maydis (Corn smut fungus) protein is Flap endonuclease 1.